Reading from the N-terminus, the 460-residue chain is Bifunctional protein GlmU (460 aa).

Residues 1–229 (MTNYAIILAA…FNESLGVNDR (229 aa)) form a pyrophosphorylase region. Residues 8–11 (LAAG), Lys-22, Gln-72, and 77–78 (GT) each bind UDP-N-acetyl-alpha-D-glucosamine. Mg(2+) is bound at residue Asp-102. UDP-N-acetyl-alpha-D-glucosamine contacts are provided by Gly-139, Glu-154, Asn-169, and Asn-227. Asn-227 provides a ligand contact to Mg(2+). A linker region spans residues 230–250 (VALATAETVMRQRITQKHMVN). Positions 251–460 (GVTFHNPETV…RLAHHPSRSK (210 aa)) are N-acetyltransferase. UDP-N-acetyl-alpha-D-glucosamine-binding residues include Arg-332 and Lys-350. The active-site Proton acceptor is the His-362. UDP-N-acetyl-alpha-D-glucosamine is bound by residues Tyr-365 and Asn-376. Residues Ala-379, 385–386 (NY), Ser-404, Ala-422, and Arg-439 contribute to the acetyl-CoA site.

In the N-terminal section; belongs to the N-acetylglucosamine-1-phosphate uridyltransferase family. The protein in the C-terminal section; belongs to the transferase hexapeptide repeat family. As to quaternary structure, homotrimer. It depends on Mg(2+) as a cofactor.

Its subcellular location is the cytoplasm. The enzyme catalyses alpha-D-glucosamine 1-phosphate + acetyl-CoA = N-acetyl-alpha-D-glucosamine 1-phosphate + CoA + H(+). The catalysed reaction is N-acetyl-alpha-D-glucosamine 1-phosphate + UTP + H(+) = UDP-N-acetyl-alpha-D-glucosamine + diphosphate. Its pathway is nucleotide-sugar biosynthesis; UDP-N-acetyl-alpha-D-glucosamine biosynthesis; N-acetyl-alpha-D-glucosamine 1-phosphate from alpha-D-glucosamine 6-phosphate (route II): step 2/2. It participates in nucleotide-sugar biosynthesis; UDP-N-acetyl-alpha-D-glucosamine biosynthesis; UDP-N-acetyl-alpha-D-glucosamine from N-acetyl-alpha-D-glucosamine 1-phosphate: step 1/1. It functions in the pathway bacterial outer membrane biogenesis; LPS lipid A biosynthesis. Its function is as follows. Catalyzes the last two sequential reactions in the de novo biosynthetic pathway for UDP-N-acetylglucosamine (UDP-GlcNAc). The C-terminal domain catalyzes the transfer of acetyl group from acetyl coenzyme A to glucosamine-1-phosphate (GlcN-1-P) to produce N-acetylglucosamine-1-phosphate (GlcNAc-1-P), which is converted into UDP-GlcNAc by the transfer of uridine 5-monophosphate (from uridine 5-triphosphate), a reaction catalyzed by the N-terminal domain. This Streptococcus pyogenes serotype M3 (strain ATCC BAA-595 / MGAS315) protein is Bifunctional protein GlmU.